A 347-amino-acid polypeptide reads, in one-letter code: NADH-ubiquinone oxidoreductase chain 2 (347 aa).

10 helical membrane-spanning segments follow: residues 3-23 (PPIL…VMLS), 25-45 (HWLL…PILM), 66-86 (ASML…QWVI), 93-115 (IASI…HFWV), 149-169 (INTN…GWGG), 178-198 (IMAY…TYNP), 201-221 (MILN…LFML), 237-257 (FPLI…LPPL), 274-294 (NMII…YFYL), and 325-345 (LLPP…MLSV).

Belongs to the complex I subunit 2 family. Core subunit of respiratory chain NADH dehydrogenase (Complex I) which is composed of 45 different subunits. Interacts with TMEM242.

The protein resides in the mitochondrion inner membrane. It carries out the reaction a ubiquinone + NADH + 5 H(+)(in) = a ubiquinol + NAD(+) + 4 H(+)(out). Core subunit of the mitochondrial membrane respiratory chain NADH dehydrogenase (Complex I) which catalyzes electron transfer from NADH through the respiratory chain, using ubiquinone as an electron acceptor. Essential for the catalytic activity and assembly of complex I. In Canis lupus (Gray wolf), this protein is NADH-ubiquinone oxidoreductase chain 2.